A 539-amino-acid chain; its full sequence is Cytochrome P450 monooxygenase tenB (539 aa).

Residues 13–33 traverse the membrane as a helical segment; the sequence is LGYYEKVAGVLGFLSIALLFW. Residues 439–460 are disordered; sequence PFRFSRASKDDDDDGKSTSSHA. Residue C481 participates in heme binding.

This sequence belongs to the cytochrome P450 family. The cofactor is heme.

The protein localises to the membrane. It functions in the pathway secondary metabolite biosynthesis. Cytochrome P450 monooxygenase; part of the gene cluster that mediates the biosynthesis of tenellin-type 2-pyridones, iron-chelating compounds involved in iron stress tolerance, competition with the natural competitor fungus Metarhizium robertsii and insect hosts infection. TenB catalyzes the selective N-hydroxylation of the 2-pyridone nitrogen of yield tellinin and 15-hydroxytellenin (15-HT), respectively. The pathway begins with the assembly of the polyketide-amino acid backbone by the hybrid PKS-NRPS tenS with the help of the enoyl reductase tenC. These enzymes catalyze the synthesis of the pyrrolidine-2-dione intermediates pretellinin A, 11-hydropretellenin A, 12-hydropretellenin A, 13-hydropretellenin A, 14-hydropretellenin A, 12-oxopretellenin A and prototellinin D. The cytochrome P450 monooxygenase tenA then catalyzes an oxidative ring expansion of pretenellin A and 14-hydropretellenin A to form the 2-pyridone core, leading to pretenellin B and pyridovericin, respectively. The cytochrome P450 monooxygenase tenB is then required for the selective N-hydroxylation of the 2-pyridone nitrogen of yield tellinin and 15-hydroxytellenin (15-HT), respectively. The UDP-glucosyltransferase GT1 and the methyltransferase MT1, located outside the tenS gene cluster, contribute to the stepwise glycosylation and methylation of 15-HT to obtain the glycoside pyridovericin-N-O-(4-O-methyl-beta-D-glucopyranoside) (PMGP). Additional related compounds such as 1-O-methyl-15-HT, (8Z)-1-O-methyl-15-HT, and O-methyltenellin A are also produced but the enzymes involved in their biosynthesis have still to be determined. The protein is Cytochrome P450 monooxygenase tenB of Beauveria bassiana (White muscardine disease fungus).